The following is a 565-amino-acid chain: Periplasmic trehalase (565 aa).

Positions M1–A30 are cleaved as a signal peptide. Substrate is bound by residues R152, W159–D160, N196, R205–Q207, R277–E279, and G310. Catalysis depends on proton donor/acceptor residues D312 and E496. E511 provides a ligand contact to substrate. Residues P538 to P565 form a disordered region. Residues T548 to P565 are compositionally biased toward polar residues.

This sequence belongs to the glycosyl hydrolase 37 family. As to quaternary structure, monomer.

It is found in the periplasm. The catalysed reaction is alpha,alpha-trehalose + H2O = alpha-D-glucose + beta-D-glucose. Functionally, provides the cells with the ability to utilize trehalose at high osmolarity by splitting it into glucose molecules that can subsequently be taken up by the phosphotransferase-mediated uptake system. The polypeptide is Periplasmic trehalase (Escherichia coli (strain K12 / MC4100 / BW2952)).